The primary structure comprises 158 residues: Cytochrome c-type biogenesis protein CcmE (158 aa).

Residues 1–8 (MMRHRNRR) are Cytoplasmic-facing. Residues 9-29 (LATIAASAIVLVVAVGLGLMA) traverse the membrane as a helical; Signal-anchor for type II membrane protein segment. Over 30-158 (LRSAVVFFYS…PSAAGDGDSR (129 aa)) the chain is Periplasmic. Heme-binding residues include His-123 and Tyr-127. The disordered stretch occupies residues 139 to 158 (AGVWQGEGETPSAAGDGDSR).

The protein belongs to the CcmE/CycJ family.

It localises to the cell inner membrane. Functionally, heme chaperone required for the biogenesis of c-type cytochromes. Transiently binds heme delivered by CcmC and transfers the heme to apo-cytochromes in a process facilitated by CcmF and CcmH. This chain is Cytochrome c-type biogenesis protein CcmE, found in Maricaulis maris (strain MCS10) (Caulobacter maris).